The following is a 338-amino-acid chain: Ketol-acid reductoisomerase (NADP(+)) (338 aa).

One can recognise a KARI N-terminal Rossmann domain in the interval 1 to 181 (MKVFYDKDCD…GGGRAGIIET (181 aa)). NADP(+) is bound by residues 24–27 (YGSQ), Arg-47, and Ser-52. His-107 is a catalytic residue. NADP(+) is bound at residue Gly-133. The region spanning 182–327 (NFREETETDL…GKLRAMMPWI (146 aa)) is the KARI C-terminal knotted domain. Asp-190, Glu-194, Glu-226, and Glu-230 together coordinate Mg(2+). Ser-251 provides a ligand contact to substrate.

Belongs to the ketol-acid reductoisomerase family. Mg(2+) serves as cofactor.

The enzyme catalyses (2R)-2,3-dihydroxy-3-methylbutanoate + NADP(+) = (2S)-2-acetolactate + NADPH + H(+). It catalyses the reaction (2R,3R)-2,3-dihydroxy-3-methylpentanoate + NADP(+) = (S)-2-ethyl-2-hydroxy-3-oxobutanoate + NADPH + H(+). It functions in the pathway amino-acid biosynthesis; L-isoleucine biosynthesis; L-isoleucine from 2-oxobutanoate: step 2/4. It participates in amino-acid biosynthesis; L-valine biosynthesis; L-valine from pyruvate: step 2/4. Its function is as follows. Involved in the biosynthesis of branched-chain amino acids (BCAA). Catalyzes an alkyl-migration followed by a ketol-acid reduction of (S)-2-acetolactate (S2AL) to yield (R)-2,3-dihydroxy-isovalerate. In the isomerase reaction, S2AL is rearranged via a Mg-dependent methyl migration to produce 3-hydroxy-3-methyl-2-ketobutyrate (HMKB). In the reductase reaction, this 2-ketoacid undergoes a metal-dependent reduction by NADPH to yield (R)-2,3-dihydroxy-isovalerate. In Bordetella bronchiseptica (strain ATCC BAA-588 / NCTC 13252 / RB50) (Alcaligenes bronchisepticus), this protein is Ketol-acid reductoisomerase (NADP(+)).